The sequence spans 111 residues: Phosphoribosyl-ATP pyrophosphatase (111 aa).

It belongs to the PRA-PH family.

It is found in the cytoplasm. It catalyses the reaction 1-(5-phospho-beta-D-ribosyl)-ATP + H2O = 1-(5-phospho-beta-D-ribosyl)-5'-AMP + diphosphate + H(+). It participates in amino-acid biosynthesis; L-histidine biosynthesis; L-histidine from 5-phospho-alpha-D-ribose 1-diphosphate: step 2/9. The protein is Phosphoribosyl-ATP pyrophosphatase of Azotobacter vinelandii (strain DJ / ATCC BAA-1303).